Here is a 269-residue protein sequence, read N- to C-terminus: Type III pantothenate kinase (269 aa).

9–16 (DVGNTSVK) is a binding site for ATP. Residues Tyr-106 and 113 to 116 (GADR) each bind substrate. Catalysis depends on Asp-115, which acts as the Proton acceptor. Residue Asp-137 coordinates K(+). Residue Thr-140 participates in ATP binding. Thr-193 contacts substrate.

The protein belongs to the type III pantothenate kinase family. In terms of assembly, homodimer. Requires NH4(+) as cofactor. K(+) is required as a cofactor.

The protein resides in the cytoplasm. It carries out the reaction (R)-pantothenate + ATP = (R)-4'-phosphopantothenate + ADP + H(+). It participates in cofactor biosynthesis; coenzyme A biosynthesis; CoA from (R)-pantothenate: step 1/5. Functionally, catalyzes the phosphorylation of pantothenate (Pan), the first step in CoA biosynthesis. The chain is Type III pantothenate kinase from Lawsonia intracellularis (strain PHE/MN1-00).